The chain runs to 246 residues: tRNA (guanine-N(7)-)-methyltransferase (246 aa).

Positions 1–26 (MIENPSPSAANLPEHPSTDASHPRNI) are disordered. The S-adenosyl-L-methionine site is built by E75, E100, D127, and D150. The active site involves D150. K154 contributes to the substrate binding site. Positions 156 to 161 (KHNKRR) are interaction with RNA. Residues D186 and 225–228 (TKFE) each bind substrate.

It belongs to the class I-like SAM-binding methyltransferase superfamily. TrmB family.

The enzyme catalyses guanosine(46) in tRNA + S-adenosyl-L-methionine = N(7)-methylguanosine(46) in tRNA + S-adenosyl-L-homocysteine. It functions in the pathway tRNA modification; N(7)-methylguanine-tRNA biosynthesis. Catalyzes the formation of N(7)-methylguanine at position 46 (m7G46) in tRNA. The polypeptide is tRNA (guanine-N(7)-)-methyltransferase (Polaromonas sp. (strain JS666 / ATCC BAA-500)).